The sequence spans 382 residues: MPSGCRCLNLVCLLCILGATSQPARADDCSSHCDLAHGCCAPDGSCRCDPGWEGLHCERCVRMPGCQHGTCHQPWQCICHSGWAGKFCDKDEHICTSQSPCQNGGQCVYDGGGEYHCVCLPGFHGRGCERKAGPCEQAGFPCRNGGQCQDNQGFALNFTCRCLAGFMGAHCEVNVDDCLMRPCANGATCIDGINRFSCLCPEGFAGRFCTINLDDCASRPCQRGARCRDRVHDFDCLCPSGYGGKTCELVLPAPEPASVGTPQMPTSAVVVPATGPAPHSAGAGLLRISVKEVVRRQESGLGESSLVALVVFGSLTAALVLATVLLTLRAWRRGICPTGPCCYPAPHYAPARQDQECQVSMLPAGFPLSPDLPPEPGKTTAL.

A signal peptide spans 1–26 (MPSGCRCLNLVCLLCILGATSQPARA). 4 EGF-like domains span residues 27-58 (DDCS…LHCE), 62-89 (RMPG…KFCD), 91-129 (DEHI…RGCE), and 131-172 (KAGP…AHCE). The Extracellular segment spans residues 27–305 (DDCSSHCDLA…RQESGLGESS (279 aa)). 17 disulfides stabilise this stretch: Cys29–Cys40, Cys33–Cys46, Cys48–Cys57, Cys66–Cys71, Cys79–Cys88, Cys95–Cys107, Cys101–Cys117, Cys119–Cys128, Cys135–Cys148, Cys142–Cys160, Cys162–Cys171, Cys178–Cys189, Cys183–Cys198, Cys200–Cys209, Cys216–Cys227, Cys221–Cys236, and Cys238–Cys247. An N-linked (GlcNAc...) asparagine glycan is attached at Asn157. The EGF-like 5; calcium-binding domain maps to 174–210 (NVDDCLMRPCANGATCIDGINRFSCLCPEGFAGRFCT). Residues 212-248 (NLDDCASRPCQRGARCRDRVHDFDCLCPSGYGGKTCE) enclose the EGF-like 6; calcium-binding domain. Residues 306-326 (LVALVVFGSLTAALVLATVLL) traverse the membrane as a helical segment. Topologically, residues 327-382 (TLRAWRRGICPTGPCCYPAPHYAPARQDQECQVSMLPAGFPLSPDLPPEPGKTTAL) are cytoplasmic.

Detected in a number of tissues including lung, brain, adrenal gland, testis, adult liver, placenta, ovary and thymus. Not detected in fetal liver or in adult spleen, muscle and heart.

The protein localises to the membrane. Its function is as follows. Regulates adipogenesis. The protein is Protein delta homolog 2 (Dlk2) of Mus musculus (Mouse).